We begin with the raw amino-acid sequence, 227 residues long: Small ribosomal subunit protein uS3 (227 aa).

The 69-residue stretch at 38–106 (LRKYLREKLA…EVHLNIVEIR (69 aa)) folds into the KH type-2 domain.

The protein belongs to the universal ribosomal protein uS3 family. As to quaternary structure, part of the 30S ribosomal subunit. Forms a tight complex with proteins S10 and S14.

Its function is as follows. Binds the lower part of the 30S subunit head. Binds mRNA in the 70S ribosome, positioning it for translation. The sequence is that of Small ribosomal subunit protein uS3 from Paramagnetospirillum magneticum (strain ATCC 700264 / AMB-1) (Magnetospirillum magneticum).